The sequence spans 141 residues: Hemoglobin subunit alpha (141 aa).

The Globin domain maps to 1–141; sequence VLSSADKANI…VSTVLTSKYR (141 aa). Position 3 is a phosphoserine (serine 3). N6-succinyllysine occurs at positions 7 and 11. Lysine 16 is subject to N6-acetyllysine; alternate. N6-succinyllysine; alternate is present on lysine 16. Tyrosine 24 carries the post-translational modification Phosphotyrosine. Lysine 40 is subject to N6-succinyllysine. The residue at position 49 (serine 49) is a Phosphoserine. An O2-binding site is contributed by histidine 58. Histidine 87 lines the heme b pocket. At serine 102 the chain carries Phosphoserine. Threonine 108 carries the post-translational modification Phosphothreonine. Residues serine 124 and serine 131 each carry the phosphoserine modification. Residues threonine 134 and threonine 137 each carry the phosphothreonine modification. Residue serine 138 is modified to Phosphoserine.

The protein belongs to the globin family. Heterotetramer of two alpha chains and two beta chains. In terms of tissue distribution, red blood cells.

Functionally, involved in oxygen transport from the lung to the various peripheral tissues. In terms of biological role, hemopressin acts as an antagonist peptide of the cannabinoid receptor CNR1. Hemopressin-binding efficiently blocks cannabinoid receptor CNR1 and subsequent signaling. In Proteles cristata (Aardwolf), this protein is Hemoglobin subunit alpha (HBA).